Reading from the N-terminus, the 54-residue chain is Small ribosomal subunit protein uS14 (54 aa).

Cysteine 19, cysteine 22, cysteine 37, and cysteine 40 together coordinate Zn(2+).

It belongs to the universal ribosomal protein uS14 family. Zinc-binding uS14 subfamily. Part of the 30S ribosomal subunit. The cofactor is Zn(2+).

In terms of biological role, binds 16S rRNA, required for the assembly of 30S particles. The sequence is that of Small ribosomal subunit protein uS14 from Aeropyrum pernix (strain ATCC 700893 / DSM 11879 / JCM 9820 / NBRC 100138 / K1).